The chain runs to 254 residues: Cyclin homolog (254 aa).

The protein belongs to the cyclin family. Cyclin D subfamily.

In terms of biological role, may be highly relevant to the process of cellular transformation and rapid T-cell proliferation effected by HVS during latent infections of T-cells in susceptible hosts. The polypeptide is Cyclin homolog (72) (Saimiriine herpesvirus 2 (strain 11) (SaHV-2)).